A 257-amino-acid chain; its full sequence is Phycoerythrobilin:ferredoxin oxidoreductase (257 aa).

It belongs to the HY2 family.

The enzyme catalyses (3Z)-phycoerythrobilin + oxidized 2[4Fe-4S]-[ferredoxin] = 15,16-dihydrobiliverdin + reduced 2[4Fe-4S]-[ferredoxin] + 2 H(+). Catalyzes the two-electron reduction of the C2 and C3(1) diene system of 15,16-dihydrobiliverdin. This is Phycoerythrobilin:ferredoxin oxidoreductase from Prochlorococcus marinus (strain MIT 9211).